The chain runs to 393 residues: Acetylornithine aminotransferase (393 aa).

Pyridoxal 5'-phosphate is bound by residues 102 to 103 (GA) and phenylalanine 136. Arginine 139 is a N(2)-acetyl-L-ornithine binding site. 219–222 (DEVQ) contributes to the pyridoxal 5'-phosphate binding site. Position 248 is an N6-(pyridoxal phosphate)lysine (lysine 248). Serine 274 serves as a coordination point for N(2)-acetyl-L-ornithine. Threonine 275 provides a ligand contact to pyridoxal 5'-phosphate.

This sequence belongs to the class-III pyridoxal-phosphate-dependent aminotransferase family. ArgD subfamily. In terms of assembly, homodimer. The cofactor is pyridoxal 5'-phosphate.

The protein localises to the cytoplasm. The enzyme catalyses N(2)-acetyl-L-ornithine + 2-oxoglutarate = N-acetyl-L-glutamate 5-semialdehyde + L-glutamate. Its pathway is amino-acid biosynthesis; L-arginine biosynthesis; N(2)-acetyl-L-ornithine from L-glutamate: step 4/4. The polypeptide is Acetylornithine aminotransferase (Wolinella succinogenes (strain ATCC 29543 / DSM 1740 / CCUG 13145 / JCM 31913 / LMG 7466 / NCTC 11488 / FDC 602W) (Vibrio succinogenes)).